A 212-amino-acid chain; its full sequence is Fibroblast growth factor 8b (212 aa).

An N-terminal signal peptide occupies residues 1–27 (MRLKSSRLGYLFLQFMTLCFYTQMTMQ). An N-linked (GlcNAc...) asparagine glycan is attached at asparagine 139.

The protein belongs to the heparin-binding growth factors family.

The protein localises to the secreted. In terms of biological role, may act as signaling molecule during development of the midbrain-hindbrain boundary (MHB) organizer, and be involved in patterning of the nervous system. This is Fibroblast growth factor 8b (fgf8b) from Danio rerio (Zebrafish).